We begin with the raw amino-acid sequence, 246 residues long: Protein YIPF4 (246 aa).

Residues 1-115 (MQPPGPPPAY…FNRQVVRDNP (115 aa)) lie on the Cytoplasmic side of the membrane. Residues 116-136 (DFWGPLAVVLFFSMISLYGQF) traverse the membrane as a helical segment. Residues 137–140 (RVVS) are Lumenal-facing. Residues 141 to 161 (WIITIWIFGSLTIFLLARVLG) traverse the membrane as a helical segment. Residues 162–168 (GEVAYGQ) lie on the Cytoplasmic side of the membrane. Residues 169-189 (VLGVIGYSLLPLIVIAPILLV) form a helical membrane-spanning segment. The Lumenal portion of the chain corresponds to 190–197 (VGSFEMVS). The helical transmembrane segment at 198 to 218 (TLIKLFGVFWAAYSAASLLVG) threads the bilayer. Topologically, residues 219–225 (EEFKTKK) are cytoplasmic. The helical transmembrane segment at 226–246 (PLLIYPIFLLYIYFLSLYTGV) threads the bilayer.

The protein belongs to the YIP1 family. Interacts with YIPF3 and YIPF5.

The protein localises to the golgi apparatus. Its subcellular location is the cis-Golgi network membrane. Functionally, involved in the maintenance of the Golgi structure. This chain is Protein YIPF4 (Yipf4), found in Mus musculus (Mouse).